Here is a 327-residue protein sequence, read N- to C-terminus: Dolichyl-phosphate beta-glucosyltransferase (327 aa).

Residues 1–15 (MIDLFINIASFTIYG) lie on the Lumenal side of the membrane. Residues 16-36 (IPVIPLFIIVFVILSYYLLLL) form a helical membrane-spanning segment. Residues 37–327 (HDESPLWLEK…YLLGIWKIKS (291 aa)) are Cytoplasmic-facing.

This sequence belongs to the glycosyltransferase 2 family.

The protein localises to the endoplasmic reticulum membrane. The enzyme catalyses a di-trans,poly-cis-dolichyl phosphate + UDP-alpha-D-glucose = a di-trans,poly-cis-dolichyl beta-D-glucosyl phosphate + UDP. It participates in protein modification; protein glycosylation. Endoplasmic reticulum membrane-bound UDP-glucose:dolichyl-phosphate glucosyltransferase involved in protein N-linked glycosylation. This Dictyostelium discoideum (Social amoeba) protein is Dolichyl-phosphate beta-glucosyltransferase (alg5).